A 201-amino-acid chain; its full sequence is Dephospho-CoA kinase (201 aa).

The DPCK domain occupies 2-201 (MIGLTGGIAS…KRWKVIPEDQ (200 aa)). 10–15 (ASGKSS) is an ATP binding site.

This sequence belongs to the CoaE family.

The protein resides in the cytoplasm. It carries out the reaction 3'-dephospho-CoA + ATP = ADP + CoA + H(+). It functions in the pathway cofactor biosynthesis; coenzyme A biosynthesis; CoA from (R)-pantothenate: step 5/5. Functionally, catalyzes the phosphorylation of the 3'-hydroxyl group of dephosphocoenzyme A to form coenzyme A. In Halalkalibacterium halodurans (strain ATCC BAA-125 / DSM 18197 / FERM 7344 / JCM 9153 / C-125) (Bacillus halodurans), this protein is Dephospho-CoA kinase.